The chain runs to 352 residues: MLELNFSQTLGTHCLTLNETLPASGITAIFGVSGAGKTSLINAISGLTRPRKGRIVLNGRVLHDAENGICLTPEKRRIGYVFQDARLFPHYKVRGNLRYGMAKSMTGQFDKLVSLLGIEALLDRLPGSLSGGEKQRVAIGRALLTAPELLLLDEPLASLDIPRKRELLPYLQRLAREINIPMLYVSHSLDEILHLADKVMVLEDGQVKAFGPLEEVWGSSVMHPWLPKEQQSSILKVSVLEHHPHYAMTALALGDQHLWVNKLNQPLQSTLRIRIQASDVSLVLQPPQQTSIRNVLRAKVANCYDDNGQVEVQLEIGGRTLWARISPWARDELNIKPGLWLYAQVKSVSITA.

The ABC transporter domain occupies 1–229 (MLELNFSQTL…SVMHPWLPKE (229 aa)). Position 31-38 (31-38 (GVSGAGKT)) interacts with ATP. The Mop domain maps to 289–352 (QTSIRNVLRA…AQVKSVSITA (64 aa)).

The protein belongs to the ABC transporter superfamily. Molybdate importer (TC 3.A.1.8) family. In terms of assembly, the complex is composed of two ATP-binding proteins (ModC), two transmembrane proteins (ModB) and a solute-binding protein (ModA).

It localises to the cell inner membrane. The catalysed reaction is molybdate(out) + ATP + H2O = molybdate(in) + ADP + phosphate + H(+). Functionally, part of the ABC transporter complex ModABC involved in molybdenum import. Responsible for energy coupling to the transport system. The polypeptide is Molybdenum import ATP-binding protein ModC (Salmonella typhi).